The primary structure comprises 487 residues: DNA ligase (487 aa).

Lys159 serves as the catalytic N6-AMP-lysine intermediate. ATP is bound by residues Arg164, Arg182, and Glu217. Residue Glu217 coordinates a divalent metal cation. Residues Glu229–Ala237 are interaction with the sliding clamp. Residue Glu344 participates in a divalent metal cation binding. Positions 359 and 365 each coordinate ATP.

Belongs to the ATP-dependent DNA ligase family. As to quaternary structure, interacts with the sliding clamp. A divalent metal cation is required as a cofactor.

The enzyme catalyses ATP + (deoxyribonucleotide)n-3'-hydroxyl + 5'-phospho-(deoxyribonucleotide)m = (deoxyribonucleotide)n+m + AMP + diphosphate.. In terms of biological role, DNA ligase, which is expressed in the early stage of lytic development, has been implicated in T4 DNA synthesis and genetic recombination. It may also play a role in T4 DNA repair. This is DNA ligase (30) from Enterobacteria phage T4 (Bacteriophage T4).